The following is a 113-amino-acid chain: U11-theraphotoxin-Hhn1t (113 aa).

Residues 1–21 (MNTVRVTFLLVFVLAVSLGQA) form the signal peptide. A propeptide spanning residues 22–74 (DKDENRMEMQEKTEQGKSYLDFAENLLLQKLEELEAKLLEEDSEESRNSRQKR) is cleaved from the precursor. Over residues 60–69 (LEEDSEESRN) the composition is skewed to basic and acidic residues. Positions 60–83 (LEEDSEESRNSRQKRCIGEGVPCD) are disordered. 3 disulfide bridges follow: C75–C90, C82–C95, and C89–C110.

This sequence belongs to the neurotoxin 14 (magi-1) family. 01 (HNTX-16) subfamily. As to expression, expressed by the venom gland.

Its subcellular location is the secreted. In terms of biological role, probable ion channel inhibitor. This chain is U11-theraphotoxin-Hhn1t, found in Cyriopagopus hainanus (Chinese bird spider).